A 381-amino-acid chain; its full sequence is MASNFTSIPVLDYPSSLSPSTKPAFLAELRDALVKVGFFQVRDPPIPLKLQQDALRLSAQFFDLPTEKKLDIENVHSKRFLGYSRINSESTASGTDYLESILLGPNLPELGPEEPVYLHLQGPSQWPDEVSVPGFRDVLESYHSQIQDFSIEFARLIAEALEMPLDTLTKLLGQPLFSRLKPTRYLPPSMNPAAEDGSHGIGPHKDIAFMTYLLQGGTHNCLEVQNKLGHWVPVPPVPGALVVNIGRLLEVITGGVCVATTHRVILKRQGFVDGDGKSLGPRISLPFFQFVNPRLTVDDVLVDVPHHIKDLVPDQVATTEAETFFSGLFNNCIGDNIFVNHLTTYPRVGKRWYPDLMQLASEKQAESKRLDEQRRATEGHI.

It belongs to the iron/ascorbate-dependent oxidoreductase family. Fe(2+) is required as a cofactor.

It participates in mycotoxin biosynthesis. 2-oxoglutarate-dependent dioxygenase; part of the gene cluster that mediates the biosynthesis of gramillins A and B, bicyclic lipopeptides that induce cell death in maize leaves but not in wheat leaves. The nonribosomal peptide synthetase GRA1 incorporates respectively a glutamic adic (Glu), a leucine (Leu), a serine (Ser), a hydroxyglutamine (HOGln), a 2-amino decanoic acid, and 2 cysteins (CysB and CysA). The biosynthesis of 2-amino decanoic acid incorporated in gramillins could be initiated by a fatty acid synthase composed of the alpha and beta subunits FGSG_00036 and FGSG_11656. The cytochrome P450 monooxygenase FGSG_15680 could hydroxylate the fatty acid chain. Subsequent oxidation to the ketone by the oxidoreductase FGSG_00048 and transamination by aminotransferase FGSG_00049 could form 2-amino-decanoic acid. On the other hand, FGSG_15680 could also be responsible for the HO-modified glutamine at the gamma-position. Whether hydroxylation occurs on the fully assembled product or on the Gln residue prior to assembly into the gramillins requires further proof. The thioredoxin FGSG_00043 could also be required for the disulfide-bond formation between CysA and CysB. The specific involvement of the remaining proteins from the cluster is more difficult to discern, but could have broader regulatory (FGSG_00040 and FGSG_11657) or enzymatic functions (FGSG_00044 and FGSG_00045). The final C-domain of GRA1 does not possess the expected sequence of a termination CT domain, often implicated in macrocyclization and release of a cyclopeptidein fungal NRPs; and the thioesterase FGSG_00047 may act in concert with the terminal C-domain of GRA1 to catalyze the formation of the macrocyclic anhydride and release of the products. This chain is 2-oxoglutarate-dependent dioxygenase FGSG_00048, found in Gibberella zeae (strain ATCC MYA-4620 / CBS 123657 / FGSC 9075 / NRRL 31084 / PH-1) (Wheat head blight fungus).